The chain runs to 184 residues: Probable RNA 2'-phosphotransferase (184 aa).

This sequence belongs to the KptA/TPT1 family.

In terms of biological role, removes the 2'-phosphate from RNA via an intermediate in which the phosphate is ADP-ribosylated by NAD followed by a presumed transesterification to release the RNA and generate ADP-ribose 1''-2''-cyclic phosphate (APPR&gt;P). May function as an ADP-ribosylase. The protein is Probable RNA 2'-phosphotransferase of Escherichia coli (strain 55989 / EAEC).